The chain runs to 697 residues: Phenoloxidase 1 (697 aa).

Residues 1 to 101 constitute a propeptide, removed by PPAE1; sequence MSDMSGDVVE…PKHQEMATEV (101 aa). Cu cation-binding residues include histidine 217, histidine 221, and histidine 247. N-linked (GlcNAc...) asparagine glycans are attached at residues asparagine 260 and asparagine 313. Glutamate 355 acts as the Proton acceptor in catalysis. 3 residues coordinate Cu cation: histidine 370, histidine 374, and histidine 410. Residues asparagine 498 and asparagine 552 are each glycosylated (N-linked (GlcNAc...) asparagine). 2 cysteine pairs are disulfide-bonded: cysteine 587–cysteine 631 and cysteine 589–cysteine 638.

It belongs to the tyrosinase family. Heterodimer. Cu(2+) serves as cofactor. Post-translationally, activated by the cleavage of the N-terminal propeptide by PPAE1. In terms of tissue distribution, expressed in hemocytes.

It localises to the secreted. It catalyses the reaction L-tyrosine + O2 = L-dopaquinone + H2O. It carries out the reaction 2 L-dopa + O2 = 2 L-dopaquinone + 2 H2O. Its activity is regulated as follows. Activated by a cationic detergent cetyl pyridinium chloride (CPC). Inhibited by phenyl thio-urea (PTU). Functionally, this is a copper-containing oxidase that functions in the formation of pigments such as melanins and other polyphenolic compounds. Catalyzes the rate-limiting conversions of tyrosine to DOPA, DOPA to DOPA-quinone and possibly 5,6 dihydroxyindole to indole-5'6 quinone. Catalyzes the oxidation of 4-methylcatechol. Binds to the surface of hemocytes and is involved in hemocyte melanization. This Spodoptera litura (Asian cotton leafworm) protein is Phenoloxidase 1.